The chain runs to 672 residues: Penicillin-binding protein activator LpoA (672 aa).

A signal peptide spans 1 to 26; it reads MLPFHLVRTQAGRVIPVLLAALFLAG. Cys-27 carries the N-palmitoyl cysteine lipid modification. Cys-27 carries the S-diacylglycerol cysteine lipid modification. Residues 298 to 336 are disordered; that stretch reads APPTDTAQAGQVTPSSDGQNAQSPAPYSDQAVASTTPAP. A compositionally biased stretch (polar residues) spans 305 to 322; that stretch reads QAGQVTPSSDGQNAQSPA. The span at 327–336 shows a compositional bias: low complexity; it reads QAVASTTPAP.

This sequence belongs to the LpoA family. In terms of assembly, interacts with PBP1a.

It localises to the cell outer membrane. Functionally, regulator of peptidoglycan synthesis that is essential for the function of penicillin-binding protein 1A (PBP1a). The chain is Penicillin-binding protein activator LpoA from Pectobacterium parmentieri (strain WPP163) (Pectobacterium wasabiae (strain WPP163)).